The chain runs to 79 residues: Acyl carrier protein (79 aa).

The Carrier domain maps to Asp2–Val77. O-(pantetheine 4'-phosphoryl)serine is present on Ser37.

It belongs to the acyl carrier protein (ACP) family. Post-translationally, 4'-phosphopantetheine is transferred from CoA to a specific serine of apo-ACP by AcpS. This modification is essential for activity because fatty acids are bound in thioester linkage to the sulfhydryl of the prosthetic group.

It is found in the cytoplasm. It functions in the pathway lipid metabolism; fatty acid biosynthesis. Functionally, carrier of the growing fatty acid chain in fatty acid biosynthesis. The sequence is that of Acyl carrier protein from Burkholderia cenocepacia (strain HI2424).